The sequence spans 359 residues: Probable dual-specificity RNA methyltransferase RlmN (359 aa).

Residue Glu-91 is the Proton acceptor of the active site. In terms of domain architecture, Radical SAM core spans 97-329 (QHYGHSVCVT…KKNGVNCVVR (233 aa)). A disulfide bridge connects residues Cys-104 and Cys-340. Residues Cys-111, Cys-115, and Cys-118 each coordinate [4Fe-4S] cluster. S-adenosyl-L-methionine contacts are provided by residues 163–164 (GE), Ser-195, 218–220 (SLH), and Asn-296. Cys-340 (S-methylcysteine intermediate) is an active-site residue.

It belongs to the radical SAM superfamily. RlmN family. The cofactor is [4Fe-4S] cluster.

The protein resides in the cytoplasm. The enzyme catalyses adenosine(2503) in 23S rRNA + 2 reduced [2Fe-2S]-[ferredoxin] + 2 S-adenosyl-L-methionine = 2-methyladenosine(2503) in 23S rRNA + 5'-deoxyadenosine + L-methionine + 2 oxidized [2Fe-2S]-[ferredoxin] + S-adenosyl-L-homocysteine. It carries out the reaction adenosine(37) in tRNA + 2 reduced [2Fe-2S]-[ferredoxin] + 2 S-adenosyl-L-methionine = 2-methyladenosine(37) in tRNA + 5'-deoxyadenosine + L-methionine + 2 oxidized [2Fe-2S]-[ferredoxin] + S-adenosyl-L-homocysteine. Specifically methylates position 2 of adenine 2503 in 23S rRNA and position 2 of adenine 37 in tRNAs. The protein is Probable dual-specificity RNA methyltransferase RlmN of Streptococcus pyogenes serotype M2 (strain MGAS10270).